The primary structure comprises 1125 residues: Exportin-6 (1125 aa).

At Ala2 the chain carries N-acetylalanine. The region spanning 31 to 97 (IEELLNNFAQ…RSCLPKLLLA (67 aa)) is the Importin N-terminal domain. Ser199 is modified (phosphoserine). Phosphothreonine is present on residues Thr201 and Thr204. A phosphoserine mark is found at Ser208 and Ser224.

It belongs to the exportin family. In terms of assembly, found in a complex with XPO6, Ran, ACTB and PFN1. Interacts with ACTB. Interacts with ACTB in a RanGTP-dependent manner.

Its subcellular location is the nucleus. It is found in the cytoplasm. Its function is as follows. Mediates the nuclear export of actin and profilin-actin complexes in somatic cells. This is Exportin-6 (XPO6) from Homo sapiens (Human).